The primary structure comprises 117 residues: uncharacterized protein (117 aa).

2 helical membrane passes run 9–29 (ITSH…FIPF) and 56–76 (VIIV…FFIP).

The protein resides in the membrane. This is an uncharacterized protein from Saccharomyces cerevisiae (strain ATCC 204508 / S288c) (Baker's yeast).